A 428-amino-acid polypeptide reads, in one-letter code: Histidine--tRNA ligase (428 aa).

The protein belongs to the class-II aminoacyl-tRNA synthetase family. Homodimer.

It is found in the cytoplasm. It catalyses the reaction tRNA(His) + L-histidine + ATP = L-histidyl-tRNA(His) + AMP + diphosphate + H(+). The protein is Histidine--tRNA ligase of Lactobacillus johnsonii (strain CNCM I-12250 / La1 / NCC 533).